Consider the following 194-residue polypeptide: Imidazoleglycerol-phosphate dehydratase (194 aa).

This sequence belongs to the imidazoleglycerol-phosphate dehydratase family.

The protein resides in the cytoplasm. It catalyses the reaction D-erythro-1-(imidazol-4-yl)glycerol 3-phosphate = 3-(imidazol-4-yl)-2-oxopropyl phosphate + H2O. The protein operates within amino-acid biosynthesis; L-histidine biosynthesis; L-histidine from 5-phospho-alpha-D-ribose 1-diphosphate: step 6/9. The chain is Imidazoleglycerol-phosphate dehydratase from Streptococcus gordonii (strain Challis / ATCC 35105 / BCRC 15272 / CH1 / DL1 / V288).